The following is a 697-amino-acid chain: tRNA 5-methylaminomethyl-2-thiouridine biosynthesis bifunctional protein MnmC (697 aa).

The tRNA (mnm(5)s(2)U34)-methyltransferase stretch occupies residues 1 to 272 (MPKPASMAMN…KREMLTAVMS (272 aa)). Positions 300–697 (IGAGVAGLLT…HKHKTRQAVI (398 aa)) are FAD-dependent cmnm(5)s(2)U34 oxidoreductase.

This sequence in the N-terminal section; belongs to the methyltransferase superfamily. tRNA (mnm(5)s(2)U34)-methyltransferase family. In the C-terminal section; belongs to the DAO family. FAD is required as a cofactor.

It is found in the cytoplasm. It catalyses the reaction 5-aminomethyl-2-thiouridine(34) in tRNA + S-adenosyl-L-methionine = 5-methylaminomethyl-2-thiouridine(34) in tRNA + S-adenosyl-L-homocysteine + H(+). In terms of biological role, catalyzes the last two steps in the biosynthesis of 5-methylaminomethyl-2-thiouridine (mnm(5)s(2)U) at the wobble position (U34) in tRNA. Catalyzes the FAD-dependent demodification of cmnm(5)s(2)U34 to nm(5)s(2)U34, followed by the transfer of a methyl group from S-adenosyl-L-methionine to nm(5)s(2)U34, to form mnm(5)s(2)U34. In Psychrobacter cryohalolentis (strain ATCC BAA-1226 / DSM 17306 / VKM B-2378 / K5), this protein is tRNA 5-methylaminomethyl-2-thiouridine biosynthesis bifunctional protein MnmC.